We begin with the raw amino-acid sequence, 391 residues long: MSCTVAIPSSPVFSPSRRPLSCKAASASASPESVSVAASSPAQAAPPAGSPLRPFALRAHLREEATPSPQPSAAAAAAVSAPAGSVLKRRRPAPLVVPVCGGAAAAAAAAAVAAVESDPRNEVEEDGEEFAVYCRRGKGRRRVEMEDRHVAKVALGGDPKVAFFGVFDGHGGKSAAEFVAENMPKFMAEEMCKVDGGDSGETEQAVKRCYLKTDEEFLKREESGGACCVTALLQKGGLVVSNAGDCRAVLSRAGKAEALTSDHRASREDERERIENLGGFVVNYRGTWRVQGSLAVSRGIGDAHLKQWVVSDPDTTTLGVDSQCEFLILASDGLWDKVENQEAVDIARPLYISNDKASRMTACRRLVETAVTRGSTDDISIVIIQLQQFSR.

Positions 1-53 are disordered; sequence MSCTVAIPSSPVFSPSRRPLSCKAASASASPESVSVAASSPAQAAPPAGSPLR. Low complexity predominate over residues 8–51; it reads PSSPVFSPSRRPLSCKAASASASPESVSVAASSPAQAAPPAGSP. A helical transmembrane segment spans residues 95–115; the sequence is LVVPVCGGAAAAAAAAAVAAV. The region spanning 129 to 386 is the PPM-type phosphatase domain; it reads EFAVYCRRGK…DDISIVIIQL (258 aa). Mn(2+)-binding residues include Asp-168, Gly-169, Asp-332, and Asp-377.

The protein belongs to the PP2C family. Mg(2+) is required as a cofactor. The cofactor is Mn(2+).

The protein localises to the membrane. The enzyme catalyses O-phospho-L-seryl-[protein] + H2O = L-seryl-[protein] + phosphate. It catalyses the reaction O-phospho-L-threonyl-[protein] + H2O = L-threonyl-[protein] + phosphate. This is Probable protein phosphatase 2C 32 from Oryza sativa subsp. japonica (Rice).